A 470-amino-acid polypeptide reads, in one-letter code: TNF receptor-associated factor 4 (470 aa).

The segment at 18-58 (CPLCGKPMREPVQVSTCGHRFCDTCLQEFLSEGVFKCPEDQ) adopts an RING-type zinc-finger fold. TRAF-type zinc fingers lie at residues 102 to 154 (HLNT…EAYE), 155 to 208 (SHEG…DTIQ), and 209 to 266 (SHQY…KLAM). A Glycyl lysine isopeptide (Lys-Gly) (interchain with G-Cter in ubiquitin) cross-link involves residue lysine 263. The stretch at 277–309 (HLAMMCALVSRQRQELQELRRELEELSVGSDGV) forms a coiled coil. Residues 307 to 462 (DGVLIWKIGS…DDAVFIRAAV (156 aa)) enclose the MATH domain. Serine 426 is modified (phosphoserine).

It belongs to the TNF receptor-associated factor family. B subfamily. As to quaternary structure, homotrimer. Interacts with LTBR/TNFRSF3, NGFR/TNFRSF16, RPS6KB1 and TGFB1I1. Interacts with SMURF1. Interacts (via TRAF domain) with MAP3K4 (via kinase domain). Interacts with NCF1, TICAM1, IRAK1 and TRAF6, and is probably part of a complex containing TRAF4, NCF1, TICAM1, IRAK1 and TRAF6. Interacts (via MATH domain) with GP6 and GP1BB. Interacts with EGFR (via C-terminal region); this interaction promotes the formation of EGFR asymmetric dimers. Interacts with PKM; this interaction promotes PKM kinase activity. Post-translationally, polyubiquitinated, leading to its proteasomal degradation. Ubiquitinated at Lys-263 by the SCF(FBXL2) complex, leading to its degradation by the proteasome. In terms of tissue distribution, expressed in epithelial cells of thymus, dendritic cells of lymph node, and in the basal cell layer of epithelia such as epidermis, nasopharynx, respiratory tract, salivary gland, and esophagus.

The protein resides in the cytoplasm. The protein localises to the nucleus. It is found in the perinuclear region. Its subcellular location is the cell junction. It localises to the tight junction. The protein resides in the cell membrane. The protein localises to the cytoskeleton. It carries out the reaction S-ubiquitinyl-[E2 ubiquitin-conjugating enzyme]-L-cysteine + [acceptor protein]-L-lysine = [E2 ubiquitin-conjugating enzyme]-L-cysteine + N(6)-ubiquitinyl-[acceptor protein]-L-lysine.. It functions in the pathway protein degradation; proteasomal ubiquitin-dependent pathway. Functionally, adapter protein with E3 ligase activity that is involved in many diverse biological processes including cell proliferation, migration, differentiation, DNA repair, platelet activation or apoptosis. Promotes EGFR-mediated signaling by facilitating the dimerization of EGFR and downstream AKT activation thereby promoting cell proliferation. Ubiquitinates SMURF2 through 'Lys-48'-linked ubiquitin chain leading to SMURF2 degradation through the proteasome and subsequently osteogenic differentiation. Promotes 'Lys-63'-mediated ubiquitination of CHK1 which in turn activates cell cycle arrest and activation of DNA repair. In addition, promotes an atypical 'Lys-29'-linked ubiquitination at the C-terminal end of IRS1 which is crucial for insulin-like growth factor (IGF) signal transduction. Regulates activation of NF-kappa-B in response to signaling through Toll-like receptors. Required for normal skeleton development, and for normal development of the respiratory tract. Required for activation of RPS6KB1 in response to TNF signaling. Modulates TRAF6 functions. Inhibits adipogenic differentiation by activating pyruvate kinase PKM activity and subsequently the beta-catenin signaling pathway. The protein is TNF receptor-associated factor 4 (TRAF4) of Homo sapiens (Human).